A 1288-amino-acid polypeptide reads, in one-letter code: Symplekin (1288 aa).

The tract at residues 1 to 124 (MASSSGDSVT…NMLLRDENVN (124 aa)) is interaction with HSF1. Phosphoserine is present on Ser13. 5 HEAT repeats span residues 31 to 64 (TTSE…LIIN), 67 to 101 (PTLL…EACK), 104 to 146 (IELL…WMVK), 153 to 192 (LQEA…GLIV), and 227 to 266 (VLWE…IARQ). The interval 335-392 (IARNMPSSKDSRKRPRDDTDSTLKKMKLEPNLGEDDEDKDLEPGPSGTSKASAQISGQ) is disordered. The short motif at 345 to 360 (SRKRPRDDTDSTLKKM) is the Nuclear localization signal element. A compositionally biased stretch (basic and acidic residues) spans 349–362 (PRDDTDSTLKKMKL). Lys361 participates in a covalent cross-link: Glycyl lysine isopeptide (Lys-Gly) (interchain with G-Cter in SUMO1); alternate. Lys361 participates in a covalent cross-link: Glycyl lysine isopeptide (Lys-Gly) (interchain with G-Cter in SUMO2); alternate. Residues 380 to 392 (SGTSKASAQISGQ) are compositionally biased toward polar residues. Residue Lys483 forms a Glycyl lysine isopeptide (Lys-Gly) (interchain with G-Cter in SUMO2) linkage. Ser494 bears the Phosphoserine mark. Disordered stretches follow at residues 1130–1151 (PAPA…PPQD) and 1163–1288 (LKRQ…KGNS). Residues 1131-1149 (APAPAPAPAPAPAPAPRPP) show a composition bias toward pro residues. Residues 1163–1173 (LKRQLEEEQKQ) are compositionally biased toward basic and acidic residues. Phosphoserine is present on residues Ser1238 and Ser1239. Residue Lys1256 forms a Glycyl lysine isopeptide (Lys-Gly) (interchain with G-Cter in SUMO1) linkage. At Ser1260 the chain carries Phosphoserine. The span at 1267–1288 (AVEEALKTSSPETREPESKGNS) shows a compositional bias: basic and acidic residues. Thr1274 is subject to Phosphothreonine. Ser1276 is modified (phosphoserine).

The protein belongs to the Symplekin family. Found in a heat-sensitive complex at least composed of several cleavage and polyadenylation specific and cleavage stimulation factors. Interacts with CPSF2, CPSF3 and CSTF2. Interacts (via N-terminus) with HSF1; this interaction is direct and occurs upon heat shock. Interacts with SSU72.

It localises to the cytoplasm. The protein localises to the cytoskeleton. It is found in the cell junction. The protein resides in the tight junction. Its subcellular location is the cell membrane. It localises to the nucleus. The protein localises to the nucleoplasm. Scaffold protein that functions as a component of a multimolecular complex involved in histone mRNA 3'-end processing. Specific component of the tight junction (TJ) plaque, but might not be an exclusively junctional component. May have a house-keeping rule. Is involved in pre-mRNA polyadenylation. Enhances SSU72 phosphatase activity. The sequence is that of Symplekin (Sympk) from Mus musculus (Mouse).